The following is a 341-amino-acid chain: N-acetyl-gamma-glutamyl-phosphate reductase (341 aa).

Residue cysteine 149 is part of the active site.

The protein belongs to the NAGSA dehydrogenase family. Type 1 subfamily.

Its subcellular location is the cytoplasm. The enzyme catalyses N-acetyl-L-glutamate 5-semialdehyde + phosphate + NADP(+) = N-acetyl-L-glutamyl 5-phosphate + NADPH + H(+). The protein operates within amino-acid biosynthesis; L-arginine biosynthesis; N(2)-acetyl-L-ornithine from L-glutamate: step 3/4. Functionally, catalyzes the NADPH-dependent reduction of N-acetyl-5-glutamyl phosphate to yield N-acetyl-L-glutamate 5-semialdehyde. This is N-acetyl-gamma-glutamyl-phosphate reductase from Methanocaldococcus jannaschii (strain ATCC 43067 / DSM 2661 / JAL-1 / JCM 10045 / NBRC 100440) (Methanococcus jannaschii).